The following is a 352-amino-acid chain: tRNA uridine(34) hydroxylase (352 aa).

The Rhodanese domain maps to D146–L240. C200 acts as the Cysteine persulfide intermediate in catalysis. The span at E315–G328 shows a compositional bias: basic and acidic residues. The tract at residues E315–E352 is disordered. Polar residues predominate over residues G342–E352.

The protein belongs to the TrhO family.

It carries out the reaction uridine(34) in tRNA + AH2 + O2 = 5-hydroxyuridine(34) in tRNA + A + H2O. In terms of biological role, catalyzes oxygen-dependent 5-hydroxyuridine (ho5U) modification at position 34 in tRNAs. The polypeptide is tRNA uridine(34) hydroxylase (Photorhabdus laumondii subsp. laumondii (strain DSM 15139 / CIP 105565 / TT01) (Photorhabdus luminescens subsp. laumondii)).